Here is a 75-residue protein sequence, read N- to C-terminus: Small ribosomal subunit protein bS18 (75 aa).

The protein belongs to the bacterial ribosomal protein bS18 family. In terms of assembly, part of the 30S ribosomal subunit. Forms a tight heterodimer with protein bS6.

Functionally, binds as a heterodimer with protein bS6 to the central domain of the 16S rRNA, where it helps stabilize the platform of the 30S subunit. The sequence is that of Small ribosomal subunit protein bS18 (rbsR) from Rhodobacter capsulatus (strain ATCC BAA-309 / NBRC 16581 / SB1003).